A 398-amino-acid polypeptide reads, in one-letter code: Cytochrome b (398 aa).

A run of 4 helical transmembrane segments spans residues 38 to 58 (FGPL…FLAM), 82 to 104 (WFLR…FHMF), 119 to 139 (VRCS…IGYV), and 185 to 205 (FFSL…LHLG). Residues His-88 and His-102 each contribute to the heme b site. Positions 189 and 203 each coordinate heme b. His-208 contacts a ubiquinone. 4 helical membrane-spanning segments follow: residues 231 to 251 (YYVK…IFIF), 295 to 316 (AGGV…FLNQ), 328 to 348 (IYHI…WIGC), and 355 to 374 (FVTI…AIMP).

Belongs to the cytochrome b family. The main subunits of complex b-c1 are: cytochrome b, cytochrome c1 and the Rieske protein. The cofactor is heme b.

The protein resides in the mitochondrion inner membrane. Component of the ubiquinol-cytochrome c reductase complex (complex III or cytochrome b-c1 complex) that is part of the mitochondrial respiratory chain. The b-c1 complex mediates electron transfer from ubiquinol to cytochrome c. Contributes to the generation of a proton gradient across the mitochondrial membrane that is then used for ATP synthesis. In Daucus carota (Wild carrot), this protein is Cytochrome b (MT-CYB).